Here is a 547-residue protein sequence, read N- to C-terminus: Chaperonin GroEL (547 aa).

Residues 30–33 (TLGP), K51, 87–91 (DGTTT), G415, 479–481 (NAA), and D495 each bind ATP.

The protein belongs to the chaperonin (HSP60) family. As to quaternary structure, forms a cylinder of 14 subunits composed of two heptameric rings stacked back-to-back. Interacts with the co-chaperonin GroES.

It is found in the cytoplasm. It catalyses the reaction ATP + H2O + a folded polypeptide = ADP + phosphate + an unfolded polypeptide.. In terms of biological role, together with its co-chaperonin GroES, plays an essential role in assisting protein folding. The GroEL-GroES system forms a nano-cage that allows encapsulation of the non-native substrate proteins and provides a physical environment optimized to promote and accelerate protein folding. This Pseudomonas putida (strain GB-1) protein is Chaperonin GroEL.